A 432-amino-acid polypeptide reads, in one-letter code: tRNA modification GTPase MnmE (432 aa).

Residues arginine 23, glutamate 85, and lysine 124 each coordinate (6S)-5-formyl-5,6,7,8-tetrahydrofolate. One can recognise a TrmE-type G domain in the interval 217 to 362; sequence GARLALIGAP…LKEAVREALL (146 aa). Asparagine 227 is a K(+) binding site. Residues 227–232, 246–252, and 271–274 contribute to the GTP site; these read NAGKSS, SPIPGTT, and DTAG. Mg(2+) is bound at residue serine 231. K(+)-binding residues include serine 246, isoleucine 248, and threonine 251. Residue threonine 252 participates in Mg(2+) binding. (6S)-5-formyl-5,6,7,8-tetrahydrofolate is bound at residue lysine 432.

Belongs to the TRAFAC class TrmE-Era-EngA-EngB-Septin-like GTPase superfamily. TrmE GTPase family. Homodimer. Heterotetramer of two MnmE and two MnmG subunits. K(+) is required as a cofactor.

It localises to the cytoplasm. Its function is as follows. Exhibits a very high intrinsic GTPase hydrolysis rate. Involved in the addition of a carboxymethylaminomethyl (cmnm) group at the wobble position (U34) of certain tRNAs, forming tRNA-cmnm(5)s(2)U34. The sequence is that of tRNA modification GTPase MnmE from Thermus thermophilus (strain ATCC 27634 / DSM 579 / HB8).